A 375-amino-acid chain; its full sequence is Alcohol dehydrogenase 1 (375 aa).

At S1 the chain carries N-acetylserine. Residues C46, H67, C97, C100, C103, C111, and C174 each coordinate Zn(2+). Residues 199–204 (GLGGVG), D223, K228, 293–295 (VGV), and R370 each bind NAD(+).

This sequence belongs to the zinc-containing alcohol dehydrogenase family. Class-I subfamily. As to quaternary structure, homodimer. Zn(2+) serves as cofactor.

It localises to the cytoplasm. The enzyme catalyses a primary alcohol + NAD(+) = an aldehyde + NADH + H(+). The catalysed reaction is a secondary alcohol + NAD(+) = a ketone + NADH + H(+). In Naja naja (Indian cobra), this protein is Alcohol dehydrogenase 1.